The primary structure comprises 228 residues: MNLRKLRLLFVMCIGLTLILTAVPAHARTITNNEMGNHSGYDYELWKDYGNTSMTLNNGGAFSAGWNNIGNALFRKGKKFDSTRTHHQLGNISINYNASFNPGGNSYLCVYGWTQSPLAEYYIVDSWGTYRPTGAYKGSFYADGGTYDIYETTRVNQPSIIGIATFKQYWSVRQTKRTSGTVSVSAHFRKWESLGMPMGKMYETAFTVEGYQSSGSANVMTNQLFIGN.

An N-terminal signal peptide occupies residues 1-27 (MNLRKLRLLFVMCIGLTLILTAVPAHA). In terms of domain architecture, GH11 spans 29-222 (TITNNEMGNH…SSGSANVMTN (194 aa)). The Nucleophile role is filled by Glu-120. Residue Glu-209 is the Proton donor of the active site.

This sequence belongs to the glycosyl hydrolase 11 (cellulase G) family.

It catalyses the reaction Endohydrolysis of (1-&gt;4)-beta-D-xylosidic linkages in xylans.. Its pathway is glycan degradation; xylan degradation. In Bacillus pumilus (Bacillus mesentericus), this protein is Endo-1,4-beta-xylanase A (xynA).